We begin with the raw amino-acid sequence, 258 residues long: Archaerhodopsin-3 (258 aa).

The propeptide occupies 1-6; the sequence is MDPIAL. Residue glutamine 7 is modified to Pyrrolidone carboxylic acid. Topologically, residues 7–18 are extracellular; it reads QAGYDLLGDGRP. The helical transmembrane segment at 19–40 threads the bilayer; that stretch reads ETLWLGIGTLLMLIGTFYFLVR. The Cytoplasmic segment spans residues 41–49; it reads GWGVTDKDA. A helical transmembrane segment spans residues 50–71; that stretch reads REYYAVTILVPGIASAAYLSMF. Residues 72 to 89 are Extracellular-facing; it reads FGIGLTEVTVGGEMLDIY. Residues 90-111 form a helical membrane-spanning segment; the sequence is YARYADWLFTTPLLLLDLALLA. The Cytoplasmic segment spans residues 112–114; it reads KVD. Residues 115 to 137 form a helical membrane-spanning segment; the sequence is RVTIGTLVGVDALMIVTGLIGAL. The Extracellular segment spans residues 138 to 141; that stretch reads SHTA. Residues 142–170 form a helical membrane-spanning segment; sequence IARYSWWLFSTICMIVVLYFLATSLRSAA. At 171 to 173 the chain is on the cytoplasmic side; that stretch reads KER. Residues 174–202 form a helical membrane-spanning segment; the sequence is GPEVASTFNTLTALVLVLWTAYPILWIIG. At 203 to 210 the chain is on the extracellular side; that stretch reads TEGAGVVG. Residues 211–243 form a helical membrane-spanning segment; the sequence is LGIETLLFMVLDVTAKVGFGFILLRSRAILGDT. Lysine 226 is modified (N6-(retinylidene)lysine). Topologically, residues 244-258 are cytoplasmic; sequence EAPEPSAGADVSAAD.

It belongs to the archaeal/bacterial/fungal opsin family.

The protein localises to the cell membrane. Functionally, light-driven proton pump. The polypeptide is Archaerhodopsin-3 (aop3) (Halorubrum sodomense).